A 139-amino-acid polypeptide reads, in one-letter code: D-ribose pyranase (139 aa).

H20 acts as the Proton donor in catalysis. Substrate is bound by residues D28, H106, and 128 to 130 (YAN).

It belongs to the RbsD / FucU family. RbsD subfamily. In terms of assembly, homodecamer.

It localises to the cytoplasm. The catalysed reaction is beta-D-ribopyranose = beta-D-ribofuranose. It participates in carbohydrate metabolism; D-ribose degradation; D-ribose 5-phosphate from beta-D-ribopyranose: step 1/2. In terms of biological role, catalyzes the interconversion of beta-pyran and beta-furan forms of D-ribose. The protein is D-ribose pyranase of Escherichia coli O6:H1 (strain CFT073 / ATCC 700928 / UPEC).